The following is an 80-amino-acid chain: Protein FAM229B (80 aa).

Positions 1–44 (MPFRFGTQPRRFPVEGGDSSIGLEPGLSSSATCNGKEMSPTRQL) are disordered.

The protein belongs to the FAM229 family.

In Bos taurus (Bovine), this protein is Protein FAM229B (FAM229B).